The sequence spans 237 residues: Concanavalin-Br (237 aa).

Mn(2+) contacts are provided by Glu8 and Asp10. 4 residues coordinate Ca(2+): Asp10, Tyr12, Asn14, and Asp19. Tyr12 contributes to the a carbohydrate binding site. Positions 19, 24, and 34 each coordinate Mn(2+). A carbohydrate is bound at residue 99 to 100 (LY). Asp208 provides a ligand contact to Ca(2+). Position 228 (Arg228) interacts with a carbohydrate.

It belongs to the leguminous lectin family. Homotetramer.

Its function is as follows. Glucose/D-mannose specific lectin. Has anti-inflammatory activity in rats. Induces histamine release in mast cells from hamster and rat. Induces lymphocyte proliferation and IFNG production. Shows toxicity against the aquatic snail B.glabrata at concentrations higher than 20 ug/ml. The chain is Concanavalin-Br from Canavalia brasiliensis (Brazilian jack bean).